The primary structure comprises 72 residues: Metallothionein-like protein type 2 A (72 aa).

Belongs to the metallothionein superfamily. Type 15 family. In terms of tissue distribution, leaves and roots.

Its function is as follows. Metallothioneins have a high content of cysteine residues that bind various heavy metals. The chain is Metallothionein-like protein type 2 A (MTA) from Solanum lycopersicum (Tomato).